A 310-amino-acid chain; its full sequence is Porphobilinogen deaminase (310 aa).

Position 242 is an S-(dipyrrolylmethanemethyl)cysteine (C242).

This sequence belongs to the HMBS family. As to quaternary structure, monomer. Dipyrromethane serves as cofactor.

It carries out the reaction 4 porphobilinogen + H2O = hydroxymethylbilane + 4 NH4(+). It participates in porphyrin-containing compound metabolism; protoporphyrin-IX biosynthesis; coproporphyrinogen-III from 5-aminolevulinate: step 2/4. Functionally, tetrapolymerization of the monopyrrole PBG into the hydroxymethylbilane pre-uroporphyrinogen in several discrete steps. The polypeptide is Porphobilinogen deaminase (Shewanella sp. (strain ANA-3)).